The sequence spans 101 residues: Small ribosomal subunit protein uS14 (101 aa).

Belongs to the universal ribosomal protein uS14 family. As to quaternary structure, part of the 30S ribosomal subunit. Contacts proteins S3 and S10.

Its function is as follows. Binds 16S rRNA, required for the assembly of 30S particles and may also be responsible for determining the conformation of the 16S rRNA at the A site. The polypeptide is Small ribosomal subunit protein uS14 (Albidiferax ferrireducens (strain ATCC BAA-621 / DSM 15236 / T118) (Rhodoferax ferrireducens)).